A 709-amino-acid chain; its full sequence is Alpha-1,2-mannosyltransferase MNN24 (709 aa).

Topologically, residues 1 to 9 are cytoplasmic; the sequence is MFSIPVSSK. The helical transmembrane segment at 10 to 30 threads the bilayer; sequence TVRLILVSLLLITLINILAAF. Residues 31 to 709 lie on the Extracellular side of the membrane; the sequence is QRSTLSSWFP…KNHIEFLEIS (679 aa). N-linked (GlcNAc...) asparagine glycosylation occurs at asparagine 317.

Belongs to the MNN1/MNT family.

It is found in the golgi apparatus membrane. Its pathway is protein modification; protein glycosylation. Functionally, alpha-1,2-mannosyltransferase required for cell wall integrity. Responsible for addition of the first alpha-1,2-linked mannose to form the branches on the mannan backbone of oligosaccharides. Addition of alpha-1,2-mannose is required for stabilization of the alpha-1,6-mannose backbone and hence regulates mannan fibril length; and is important for both immune recognition and virulence. The polypeptide is Alpha-1,2-mannosyltransferase MNN24 (MNN24) (Candida albicans (strain SC5314 / ATCC MYA-2876) (Yeast)).